The chain runs to 592 residues: Arginine--tRNA ligase (592 aa).

The 'HIGH' region signature appears at 134–144 (ANPTGPLHVGH).

It belongs to the class-I aminoacyl-tRNA synthetase family. Monomer.

The protein localises to the cytoplasm. It carries out the reaction tRNA(Arg) + L-arginine + ATP = L-arginyl-tRNA(Arg) + AMP + diphosphate. The polypeptide is Arginine--tRNA ligase (Coxiella burnetii (strain CbuG_Q212) (Coxiella burnetii (strain Q212))).